A 279-amino-acid chain; its full sequence is Putative expansin-A26 (279 aa).

Positions 1–27 are cleaved as a signal peptide; it reads MKLLEKMIYVEFLMIIMAMWVVPMSYG. The 111-residue stretch at 76 to 186 folds into the Expansin-like EG45 domain; that stretch reads QGACGYGNLF…RRIPCSKTGG (111 aa). An Expansin-like CBD domain is found at 196–275; that stretch reads YFLMVLIYNV…NWGFGQTFDG (80 aa).

This sequence belongs to the expansin family. Expansin A subfamily.

It localises to the secreted. The protein resides in the cell wall. It is found in the membrane. In terms of biological role, causes loosening and extension of plant cell walls by disrupting non-covalent bonding between cellulose microfibrils and matrix glucans. No enzymatic activity has been found. This is Putative expansin-A26 (EXPA26) from Arabidopsis thaliana (Mouse-ear cress).